Consider the following 205-residue polypeptide: MFVKKGLLLVVSGPSGAGKGTICKELLKENDTIKLSVSATTRKPRTGEVDGVNYFFISKEKFEEMIEKGEFLEYAQIYDNFYGTPKAAIMECLEKGQDVLLEIEMQGAKQIKEVCPEGVFIFVLPPSLEELKNRIVGRGTETEAEIEKRFSCAYEEIKMIKDYDYFIFNEDVKTSAKEIEGIISSEKNKVSRYKNIIIEKFKEEL.

The Guanylate kinase-like domain occupies 6–184 (GLLLVVSGPS…SAKEIEGIIS (179 aa)). An ATP-binding site is contributed by 13–20 (GPSGAGKG).

This sequence belongs to the guanylate kinase family.

The protein resides in the cytoplasm. The enzyme catalyses GMP + ATP = GDP + ADP. Essential for recycling GMP and indirectly, cGMP. The sequence is that of Guanylate kinase from Clostridioides difficile (strain 630) (Peptoclostridium difficile).